The sequence spans 159 residues: Phosphopantetheine adenylyltransferase (159 aa).

T9 contributes to the substrate binding site. ATP is bound by residues 9–10 (TF) and H17. The substrate site is built by K41, L73, and R87. ATP is bound by residues 88-90 (GLR), E98, and 123-129 (YSFISST).

Belongs to the bacterial CoaD family. As to quaternary structure, homohexamer. Mg(2+) is required as a cofactor.

The protein resides in the cytoplasm. The catalysed reaction is (R)-4'-phosphopantetheine + ATP + H(+) = 3'-dephospho-CoA + diphosphate. It functions in the pathway cofactor biosynthesis; coenzyme A biosynthesis; CoA from (R)-pantothenate: step 4/5. In terms of biological role, reversibly transfers an adenylyl group from ATP to 4'-phosphopantetheine, yielding dephospho-CoA (dPCoA) and pyrophosphate. This is Phosphopantetheine adenylyltransferase from Pseudomonas putida (strain ATCC 700007 / DSM 6899 / JCM 31910 / BCRC 17059 / LMG 24140 / F1).